A 475-amino-acid chain; its full sequence is Cytosolic non-specific dipeptidase (475 aa).

A2 bears the N-acetylalanine mark. An N6-acetyllysine modification is found at K9. Phosphoserine is present on S58. Mn(2+) is bound at residue H99. D101 is a catalytic residue. Mn(2+) is bound at residue D132. E166 serves as the catalytic Proton acceptor. Substrate-binding positions include 166–167 (EE), D195, and H228. Positions 167 and 195 each coordinate Mn(2+). Residue S299 is modified to Phosphoserine. Positions 330, 343, 417, and 445 each coordinate substrate. Residue H445 participates in Mn(2+) binding.

This sequence belongs to the peptidase M20A family. Homodimer. Mn(2+) is required as a cofactor. In terms of tissue distribution, ubiquitously expressed with higher levels in kidney and liver (at protein level). Expressed in peripheral blood leukocytes. Expressed in gastric mucosa and down-regulated in gastric cancer mucosal tissues (at protein level). Broadly expressed in fetal tissues. Expressed in adult liver and placenta.

The protein localises to the cytoplasm. The enzyme catalyses Hydrolysis of dipeptides, preferentially hydrophobic dipeptides including prolyl amino acids.. The catalysed reaction is L-threonyl-L-threonine + H2O = 2 L-threonine. It carries out the reaction L-threonyl-L-serine + H2O = L-threonine + L-serine. It catalyses the reaction L-seryl-L-threonine + H2O = L-threonine + L-serine. The enzyme catalyses L-cysteinylglycine + H2O = L-cysteine + glycine. The catalysed reaction is L-alanyl-L-cysteine + H2O = L-cysteine + L-alanine. It carries out the reaction (S)-lactate + L-phenylalanine = N-[(S)-lactoyl]-L-phenylalanine + H2O. With respect to regulation, inhibited by p-hydroxymercurybenzoate. The inhibitory concentration 50% (IC(50)) is 13 uM. Inhibited by bestatin. The inhibitory concentration 50% (IC(50)) is 7 nM at pH 9.5. Its function is as follows. Catalyzes the peptide bond hydrolysis in dipeptides, displaying a non-redundant activity toward threonyl dipeptides. Mediates threonyl dipeptide catabolism in a tissue-specific way. Has high dipeptidase activity toward cysteinylglycine, an intermediate metabolite in glutathione metabolism. Metabolizes N-lactoyl-amino acids, both through hydrolysis to form lactic acid and amino acids, as well as through their formation by reverse proteolysis. Plays a role in the regulation of cell cycle arrest and apoptosis. This chain is Cytosolic non-specific dipeptidase, found in Homo sapiens (Human).